Reading from the N-terminus, the 87-residue chain is Small ribosomal subunit protein eS21 (87 aa).

This sequence belongs to the eukaryotic ribosomal protein eS21 family. As to quaternary structure, component of the small ribosomal subunit. Mature ribosomes consist of a small (40S) and a large (60S) subunit. The 40S subunit contains about 33 different proteins and 1 molecule of RNA (18S). The 60S subunit contains about 49 different proteins and 3 molecules of RNA (25S, 5.8S and 5S).

Its subcellular location is the cytoplasm. Required for the processing of the 20S rRNA-precursor to mature 18S rRNA in a late step of the maturation of 40S ribosomal subunits. Has a physiological role leading to 18S rRNA stability. The polypeptide is Small ribosomal subunit protein eS21 (RPS21) (Eremothecium gossypii (strain ATCC 10895 / CBS 109.51 / FGSC 9923 / NRRL Y-1056) (Yeast)).